The primary structure comprises 177 residues: Isopentenyl-diphosphate Delta-isomerase 1 (177 aa).

Residues histidine 24 and histidine 30 each coordinate Mn(2+). Residues 28 to 160 (SLHRAISIFI…PHAYSFWLEA (133 aa)) enclose the Nudix hydrolase domain. Cysteine 65 is a catalytic residue. Cysteine 65 contributes to the Mg(2+) binding site. Residue histidine 67 participates in Mn(2+) binding. Glutamate 85 provides a ligand contact to Mg(2+). Glutamate 110 and glutamate 112 together coordinate Mn(2+). The active site involves glutamate 112.

It belongs to the IPP isomerase type 1 family. The cofactor is Mg(2+). Mn(2+) serves as cofactor.

The protein resides in the cytoplasm. It carries out the reaction isopentenyl diphosphate = dimethylallyl diphosphate. It participates in isoprenoid biosynthesis; dimethylallyl diphosphate biosynthesis; dimethylallyl diphosphate from isopentenyl diphosphate: step 1/1. Catalyzes the 1,3-allylic rearrangement of the homoallylic substrate isopentenyl (IPP) to its highly electrophilic allylic isomer, dimethylallyl diphosphate (DMAPP). The polypeptide is Isopentenyl-diphosphate Delta-isomerase 1 (Aromatoleum aromaticum (strain DSM 19018 / LMG 30748 / EbN1) (Azoarcus sp. (strain EbN1))).